We begin with the raw amino-acid sequence, 121 residues long: MSDFQKEKVEEQEQQQQQIIKIRITLTSTKVKQLENVSSNIVKNAEQHNLVKKGPVRLPTKVLKISTRKTPNGEGSKTWETYEMRIHKRYIDLEAPVQIVKRITQITIEPGVDVEVVVASN.

Ser-2 carries the post-translational modification N-acetylserine. Glycyl lysine isopeptide (Lys-Gly) (interchain with G-Cter in ubiquitin) cross-links involve residues Lys-6, Lys-8, Lys-21, Lys-32, and Lys-101.

The protein belongs to the universal ribosomal protein uS10 family. In terms of assembly, component of the small ribosomal subunit (SSU). Mature yeast ribosomes consist of a small (40S) and a large (60S) subunit. The 40S small subunit contains 1 molecule of ribosomal RNA (18S rRNA) and 33 different proteins (encoded by 57 genes). The large 60S subunit contains 3 rRNA molecules (25S, 5.8S and 5S rRNA) and 46 different proteins (encoded by 81 genes). In terms of processing, ubiquitinated at Lys-6 and Lys-8 by HEL2, to activate the ribosome quality control (RQC) pathway in response to stalled ribosomes. Post-translationally, N-terminally acetylated by acetyltransferase NatA. Also partially acetylated by NatC.

The protein resides in the cytoplasm. In terms of biological role, component of the ribosome, a large ribonucleoprotein complex responsible for the synthesis of proteins in the cell. The small ribosomal subunit (SSU) binds messenger RNAs (mRNAs) and translates the encoded message by selecting cognate aminoacyl-transfer RNA (tRNA) molecules. The large subunit (LSU) contains the ribosomal catalytic site termed the peptidyl transferase center (PTC), which catalyzes the formation of peptide bonds, thereby polymerizing the amino acids delivered by tRNAs into a polypeptide chain. The nascent polypeptides leave the ribosome through a tunnel in the LSU and interact with protein factors that function in enzymatic processing, targeting, and the membrane insertion of nascent chains at the exit of the ribosomal tunnel. The chain is Small ribosomal subunit protein uS10 from Saccharomyces cerevisiae (strain ATCC 204508 / S288c) (Baker's yeast).